A 258-amino-acid chain; its full sequence is Ribonuclease HII (258 aa).

The disordered stretch occupies residues 1–20 (MRVAPSGGPPHHHAMIRATP). The segment covering 10–20 (PHHHAMIRATP) has biased composition (basic residues). The RNase H type-2 domain occupies 48-236 (WPVAGCDEVG…VVAARERHRA (189 aa)). A divalent metal cation is bound by residues Asp54, Glu55, and Asp145.

This sequence belongs to the RNase HII family. Requires Mn(2+) as cofactor. The cofactor is Mg(2+).

Its subcellular location is the cytoplasm. The enzyme catalyses Endonucleolytic cleavage to 5'-phosphomonoester.. In terms of biological role, endonuclease that specifically degrades the RNA of RNA-DNA hybrids. This is Ribonuclease HII from Nitrobacter winogradskyi (strain ATCC 25391 / DSM 10237 / CIP 104748 / NCIMB 11846 / Nb-255).